Here is a 3341-residue protein sequence, read N- to C-terminus: Genome polyprotein (3341 aa).

Composition is skewed to basic and acidic residues over residues 1-14 and 24-35; these read MKRK…KAPG and REGRRKDKDKGG. The tract at residues 1-57 is disordered; it reads MKRKDLEARGKAPGRDSSTPFWGREGRRKDKDKGGESPSNRQVTLKTPIQSGRRAGK. At 1 to 120 the chain is on the cytoplasmic side; that stretch reads MKRKDLEARG…LESRRTTGNP (120 aa). A compositionally biased stretch (polar residues) spans 37–50; that stretch reads SPSNRQVTLKTPIQ. The segment at 55-97 is hydrophobic; homodimerization of capsid protein C; it reads AGKRQRVGLLGRLGVGWGSFLQEDIVQALIHMALVLHALFASI. Positions 117–136 are cleaved as a propeptide — ER anchor for the capsid protein C, removed in mature form by serine protease NS3; that stretch reads TGNPMTLAFILGFLTVLCGC. Residues 121–141 form a helical membrane-spanning segment; the sequence is MTLAFILGFLTVLCGCVVIDM. At 142–245 the chain is on the extracellular side; the sequence is QVSTTRGTEI…AFKTIRENKT (104 aa). N-linked (GlcNAc...) asparagine; by host glycans are attached at residues Asn-157 and Asn-243. The chain crosses the membrane as a helical span at residues 246–262; sequence IFIVALLCVAIAKRWPT. Residue Trp-263 is a topological domain, cytoplasmic. A helical transmembrane segment spans residues 264-278; sequence VVILLAIGTWTTVKG. Residues 279–665 are Extracellular-facing; that stretch reads EFVEPLYTLK…GVWQDLVGKF (387 aa). Asn-339 carries N-linked (GlcNAc...) asparagine; by host glycosylation. Residues 371–384 are involved in fusion; it reads NRGWGTGCFKWGIG. Residues Asn-399, Asn-411, Asn-575, and Asn-611 are each glycosylated (N-linked (GlcNAc...) asparagine; by host). Residues 666–686 traverse the membrane as a helical segment; it reads SVGAFFSNTALLVILVLAALI. At 687–689 the chain is on the cytoplasmic side; it reads DKR. A helical membrane pass occupies residues 690–705; it reads IAFLLVLGGYFYYVRA. The Extracellular portion of the chain corresponds to 706-1138; sequence DLGCGIDTTR…AKTRTSTLTR (433 aa). Asn-794, Asn-896, Asn-993, and Asn-1027 each carry an N-linked (GlcNAc...) asparagine; by host glycan. A helical membrane pass occupies residues 1139 to 1159; that stretch reads LFLTILAMALFGLPNLFSSVG. At 1160–1178 the chain is on the cytoplasmic side; it reads LSAWVLLVASSSAQPQDLS. A helical membrane pass occupies residues 1179 to 1199; it reads MNLWIVLQTGSSAVLLLGYMI. Over 1200–1204 the chain is Lumenal; the sequence is RRKLA. The chain crosses the membrane as a helical span at residues 1205–1225; it reads MVLGVHHLVTLMCVQFLFSAV. Topologically, residues 1226–1231 are cytoplasmic; that stretch reads DRYQKY. Residues 1232–1252 form a helical membrane-spanning segment; that stretch reads LYGLLELMASVVLLSAYKSVL. The Lumenal segment spans residues 1253-1261; it reads QALPPEVLC. Residues 1262-1282 traverse the membrane as a helical segment; it reads FSLVMGWKTALSLATVVFLIF. Residues 1283–1303 lie on the Cytoplasmic side of the membrane; sequence SLNAMYKYACQYHNPRNGYRD. The chain crosses the membrane as a helical span at residues 1304 to 1324; it reads SGANLWFWTVSLASAGGIWAA. Residues 1325-1326 lie on the Lumenal side of the membrane; it reads EK. A helical membrane pass occupies residues 1327–1347; sequence AHQPTVAAVLAFTMVVLFLYM. The Cytoplasmic segment spans residues 1348–1403; sequence EQTNVSMELEFISAGETPEGVSTENDDGINIPDLKGRYGEDGIVVGAASSSGYLPE. An intramembrane region (helical) is located at residues 1404-1424; sequence LVFVFLLGFAVTSTSYFLGAL. Residues 1425–2089 are Cytoplasmic-facing; sequence YLLIATSTNL…TERSLTVVMA (665 aa). The Peptidase S7 domain occupies 1452–1630; it reads SDDLLGLGGP…KPTDVTESLN (179 aa). Residues His-1506, Asp-1530, and Ser-1589 each act as charge relay system; for serine protease NS3 activity in the active site. Residues 1627–1780 form the Helicase ATP-binding domain; sequence ESLNCDSTRR…SNYAISDQSI (154 aa). 1640–1647 is a binding site for ATP; sequence WHPGKGKT. The short motif at 1729-1732 is the DECH box element; that stretch reads DECH. The 155-residue stretch at 1793–1947 folds into the Helicase C-terminal domain; the sequence is NVQKSVGAKK…TFMLEEAAYS (155 aa). A helical membrane pass occupies residues 2090–2110; sequence FVLGVSIMLSCFIAVWALCFL. Over 2111–2145 the chain is Lumenal; it reads FSLFRPKKATYEQMPSSDPLSGGVLVSTPSVLYCM. Residues 2146-2166 traverse the membrane as a helical segment; that stretch reads GVPLGFCVVITLAMFLVYPVL. The Cytoplasmic portion of the chain corresponds to 2167-2178; that stretch reads YKSIGNRSYMDS. The helical transmembrane segment at 2179-2199 threads the bilayer; the sequence is DLVKWVILGSCLICGVLAWEM. Residues 2200–2242 are Lumenal-facing; it reads RMFPNIRSDLMELVKAVKEPEEVVNSGPSFPSWEIAQGKGATM. Residues 2243–2263 form a helical membrane-spanning segment; it reads LDSLQVFFFITVLSTKFLYWF. The Cytoplasmic segment spans residues 2264–2302; it reads QENWTARMYAMKHPEMVSSIGGFRFDEIPFRAVLPSGFA. Positions 2303–2323 form an intramembrane region, helical; it reads IVAIASLPSVVVGLLAAGVFM. Residues 2324 to 2366 lie on the Cytoplasmic side of the membrane; sequence AIMYCQNKWNATPKILTALDARDQRHDRPTEITSRVPLENTRS. Residues 2367–2387 form a helical membrane-spanning segment; the sequence is IMYAFCLIFSLFWAFCTRSPG. Residues 2388–2412 are Lumenal-facing; that stretch reads DFLRGSLVVGASMWQILHPRSKIHD. Residues 2413–2433 traverse the membrane as a helical segment; sequence VMDFGSMVSAIGLLEMNYLFY. At 2434 to 3341 the chain is on the cytoplasmic side; it reads RFMHIAARAL…SRYRRGNDVI (908 aa). One can recognise an mRNA cap 0-1 NS5-type MT domain in the interval 2454-2706; sequence ALEKSTTIGL…SPVLPKGTRA (253 aa). Ser-2497 serves as a coordination point for S-adenosyl-L-methionine. Lys-2509 acts as the For 2'-O-MTase activity in catalysis. 6 residues coordinate S-adenosyl-L-methionine: Gly-2527, Trp-2528, Thr-2545, Ile-2546, Asp-2572, and Val-2573. The For 2'-O-MTase activity role is filled by Asp-2587. Ile-2588 is an S-adenosyl-L-methionine binding site. Catalysis depends on for 2'-O-MTase activity residues Lys-2624 and Glu-2660. Tyr-2662 is an S-adenosyl-L-methionine binding site. Zn(2+)-binding residues include Glu-2881, His-2885, Cys-2890, and Cys-2893. Residues 2970 to 3117 enclose the RdRp catalytic domain; the sequence is KYLIADDIAG…STDNRDFSSA (148 aa). Zn(2+) is bound by residues His-3152, Cys-3168, and Cys-3287.

In the N-terminal section; belongs to the class I-like SAM-binding methyltransferase superfamily. mRNA cap 0-1 NS5-type methyltransferase family. As to quaternary structure, homodimer. In terms of assembly, forms heterodimers with envelope protein E in the endoplasmic reticulum and Golgi. Homodimer; in the endoplasmic reticulum and Golgi. As to quaternary structure, forms homodimers as well as homohexamers. NS1 may interact with NS4A. In terms of assembly, forms a heterodimer with serine protease NS3. May form homooligomers. Forms a heterodimer with NS2B. Interacts with NS4B. Interacts with unphosphorylated RNA-directed RNA polymerase NS5; this interaction stimulates RNA-directed RNA polymerase NS5 guanylyltransferase activity. As to quaternary structure, interacts with serine protease NS3. In terms of assembly, interacts with host STAT2; this interaction inhibits the phosphorylation of the latter, and, when all viral proteins are present (polyprotein), targets STAT2 for degradation. Post-translationally, genome polyprotein: Specific enzymatic cleavages in vivo yield mature proteins. Cleavages in the lumen of endoplasmic reticulum are performed by host signal peptidase, whereas cleavages in the cytoplasmic side are performed by serine protease NS3. Signal cleavage at the 2K-4B site requires a prior NS3 protease-mediated cleavage at the 4A-2K site. Cleaved in post-Golgi vesicles by a host furin, releasing the mature small envelope protein M, and peptide pr. This cleavage is incomplete as up to 30% of viral particles still carry uncleaved prM. In terms of processing, N-glycosylated. Post-translationally, N-glycosylated. The excreted form is glycosylated and this is required for efficient secretion of the protein from infected cells. Phosphorylated on serines residues. This phosphorylation may trigger NS5 nuclear localization.

It localises to the virion. It is found in the host nucleus. The protein resides in the secreted. The protein localises to the virion membrane. Its subcellular location is the host endoplasmic reticulum membrane. It carries out the reaction Selective hydrolysis of -Xaa-Xaa-|-Yaa- bonds in which each of the Xaa can be either Arg or Lys and Yaa can be either Ser or Ala.. The catalysed reaction is RNA(n) + a ribonucleoside 5'-triphosphate = RNA(n+1) + diphosphate. It catalyses the reaction a ribonucleoside 5'-triphosphate + H2O = a ribonucleoside 5'-diphosphate + phosphate + H(+). The enzyme catalyses ATP + H2O = ADP + phosphate + H(+). It carries out the reaction a 5'-end (5'-triphosphoguanosine)-ribonucleoside in mRNA + S-adenosyl-L-methionine = a 5'-end (N(7)-methyl 5'-triphosphoguanosine)-ribonucleoside in mRNA + S-adenosyl-L-homocysteine. The catalysed reaction is a 5'-end (N(7)-methyl 5'-triphosphoguanosine)-ribonucleoside in mRNA + S-adenosyl-L-methionine = a 5'-end (N(7)-methyl 5'-triphosphoguanosine)-(2'-O-methyl-ribonucleoside) in mRNA + S-adenosyl-L-homocysteine + H(+). Functionally, plays a role in virus budding by binding to the cell membrane and gathering the viral RNA into a nucleocapsid that forms the core of a mature virus particle. During virus entry, may induce genome penetration into the host cytoplasm after hemifusion induced by the surface proteins. Can migrate to the cell nucleus where it modulates host functions. In terms of biological role, prevents premature fusion activity of envelope proteins in trans-Golgi by binding to envelope protein E at pH6.0. After virion release in extracellular space, gets dissociated from E dimers. Acts as a chaperone for envelope protein E during intracellular virion assembly by masking and inactivating envelope protein E fusion peptide. prM is the only viral peptide matured by host furin in the trans-Golgi network probably to avoid catastrophic activation of the viral fusion activity in acidic Golgi compartment prior to virion release. prM-E cleavage is inefficient, and many virions are only partially matured. These uncleaved prM would play a role in immune evasion. Its function is as follows. May play a role in virus budding. Exerts cytotoxic effects by activating a mitochondrial apoptotic pathway through M ectodomain. May display a viroporin activity. Functionally, binds to host cell surface receptor and mediates fusion between viral and cellular membranes. Envelope protein is synthesized in the endoplasmic reticulum in the form of heterodimer with protein prM. They play a role in virion budding in the ER, and the newly formed immature particle is covered with 60 spikes composed of heterodimer between precursor prM and envelope protein E. The virion is transported to the Golgi apparatus where the low pH causes dissociation of PrM-E heterodimers and formation of E homodimers. prM-E cleavage is inefficient, and many virions are only partially matured. These uncleaved prM would play a role in immune evasion. In terms of biological role, involved in immune evasion, pathogenesis and viral replication. Once cleaved off the polyprotein, is targeted to three destinations: the viral replication cycle, the plasma membrane and the extracellular compartment. May play a role in viral genome replication. Assist membrane bending and envelopment of genomic RNA at the endoplasmic reticulum. Excreted as a hexameric lipoparticle that plays a role against host immune response. Component of the viral RNA replication complex that functions in virion assembly and antagonizes the host immune response. Its function is as follows. Required cofactor for the serine protease function of NS3. May have membrane-destabilizing activity and form viroporins. Functionally, displays three enzymatic activities: serine protease, NTPase and RNA helicase. NS3 serine protease, in association with NS2B, performs its autocleavage and cleaves the polyprotein at dibasic sites in the cytoplasm: C-prM, NS2A-NS2B, NS2B-NS3, NS3-NS4A, NS4A-2K and NS4B-NS5. NS3 RNA helicase binds RNA and unwinds dsRNA in the 3' to 5' direction. In terms of biological role, regulates the ATPase activity of the NS3 helicase activity. NS4A allows NS3 helicase to conserve energy during unwinding. Functions as a signal peptide for NS4B and is required for the interferon antagonism activity of the latter. Its function is as follows. Inhibits interferon (IFN)-induced host STAT1 phosphorylation and nuclear translocation, thereby preventing the establishment of a cellular antiviral state by blocking the IFN-alpha/beta pathway. Functionally, replicates the viral (+) and (-) RNA genome, and performs the capping of genomes in the cytoplasm. NS5 methylates viral RNA cap at guanine N-7 and ribose 2'-O positions. Besides its role in RNA genome replication, also prevents the establishment of cellular antiviral state by blocking the interferon-alpha/beta (IFN-alpha/beta) signaling pathway. Inhibits host TYK2 and STAT2 phosphorylation, thereby preventing activation of JAK-STAT signaling pathway. This chain is Genome polyprotein, found in Aedes (CFA flavivirus).